The sequence spans 673 residues: Exoribonuclease 2 (673 aa).

The 326-residue stretch at R191 to A516 folds into the RNB domain. The region spanning D562–A645 is the S1 motif domain. The interval P650–E673 is disordered.

The protein belongs to the RNR ribonuclease family. RNase II subfamily.

Its subcellular location is the cytoplasm. The catalysed reaction is Exonucleolytic cleavage in the 3'- to 5'-direction to yield nucleoside 5'-phosphates.. In terms of biological role, involved in mRNA degradation. Hydrolyzes single-stranded polyribonucleotides processively in the 3' to 5' direction. This chain is Exoribonuclease 2, found in Aeromonas hydrophila subsp. hydrophila (strain ATCC 7966 / DSM 30187 / BCRC 13018 / CCUG 14551 / JCM 1027 / KCTC 2358 / NCIMB 9240 / NCTC 8049).